The following is a 133-amino-acid chain: Fluoride-specific ion channel FluC (133 aa).

Helical transmembrane passes span 4 to 24 (LLWI…LSVL), 35 to 55 (WGTL…WVLA), 66 to 86 (VFIF…SLES), and 107 to 127 (VLGL…LGGP). Na(+)-binding residues include glycine 74 and threonine 77.

This sequence belongs to the fluoride channel Fluc/FEX (TC 1.A.43) family.

Its subcellular location is the cell inner membrane. The enzyme catalyses fluoride(in) = fluoride(out). Its activity is regulated as follows. Na(+) is not transported, but it plays an essential structural role and its presence is essential for fluoride channel function. Its function is as follows. Fluoride-specific ion channel. Important for reducing fluoride concentration in the cell, thus reducing its toxicity. This chain is Fluoride-specific ion channel FluC, found in Salinibacter ruber (strain DSM 13855 / M31).